The primary structure comprises 23 residues: Protein male-specific 40 (23 aa).

In terms of tissue distribution, during early embryogenesis expression is initially detected at the early cleavage stages in the nucleus of two discrete cells. Subsequently, expression is abundant in the cytoplasm of the newly formed pole cells. Male-specific expression during the third larval instar.

The protein resides in the cytoplasm. Its subcellular location is the nucleus. This chain is Protein male-specific 40, found in Drosophila melanogaster (Fruit fly).